Consider the following 507-residue polypeptide: ATP synthase subunit alpha, chloroplastic (507 aa).

170-177 serves as a coordination point for ATP; it reads GDRQTGKT.

The protein belongs to the ATPase alpha/beta chains family. In terms of assembly, F-type ATPases have 2 components, CF(1) - the catalytic core - and CF(0) - the membrane proton channel. CF(1) has five subunits: alpha(3), beta(3), gamma(1), delta(1), epsilon(1). CF(0) has four main subunits: a, b, b' and c.

Its subcellular location is the plastid. The protein localises to the chloroplast thylakoid membrane. It catalyses the reaction ATP + H2O + 4 H(+)(in) = ADP + phosphate + 5 H(+)(out). In terms of biological role, produces ATP from ADP in the presence of a proton gradient across the membrane. The alpha chain is a regulatory subunit. The chain is ATP synthase subunit alpha, chloroplastic from Morus indica (Mulberry).